The chain runs to 158 residues: MARFHNPAERPYKLPDLCTTLDTTLQDITIACVYCRRPLQQTEVYEFAFSDLYVVYRDGEPLAACQSCIKFYAKIRELRYYSDSVYATTLENITNTKLYNLLIRCMCCLKPLCPAEKLRHLNSKRRFHKIAGSYTGQCRRCWTTKREDRRLTRRETQV.

Zinc fingers lie at residues 32–68 (CVYCRRPLQQTEVYEFAFSDLYVVYRDGEPLAACQSC) and 105–141 (CMCCLKPLCPAEKLRHLNSKRRFHKIAGSYTGQCRRC). The short motif at 156 to 158 (TQV) is the PDZ-binding domain element.

The protein belongs to the papillomaviridae E6 protein family. In terms of assembly, forms homodimers. Interacts with ubiquitin-protein ligase UBE3A/E6-AP and thus forms a complex with human TP53. Interacts with human NFX1 and MAGI3. Interacts with human IRF3; this interaction inhibits the establishment of antiviral state. Interacts with human TYK2; this interaction inhibits JAK-STAT activation by interferon alpha. Interacts with host DLG1; this interaction leads to the proteasomal degradation of DLG1.

The protein localises to the host cytoplasm. Its subcellular location is the host nucleus. This protein may be involved in the oncogenic potential of this virus (cervical neoplasia-associated virus). Functionally, plays a major role in the induction and maintenance of cellular transformation. Acts mainly as an oncoprotein by stimulating the destruction of many host cell key regulatory proteins. E6 associates with host UBE3A/E6-AP ubiquitin-protein ligase, and inactivates tumor suppressors TP53 and TP73 by targeting them to the 26S proteasome for degradation. In turn, DNA damage and chromosomal instabilities increase and lead to cell proliferation and cancer development. The complex E6/E6AP targets several other substrates to degradation via the proteasome including host DLG1 or NFX1, a repressor of human telomerase reverse transcriptase (hTERT). The resulting increased expression of hTERT prevents the shortening of telomere length leading to cell immortalization. Other cellular targets including BAK1, Fas-associated death domain-containing protein (FADD) and procaspase 8, are degraded by E6/E6AP causing inhibition of apoptosis. E6 also inhibits immune response by interacting with host IRF3 and TYK2. These interactions prevent IRF3 transcriptional activities and inhibit TYK2-mediated JAK-STAT activation by interferon alpha resulting in inhibition of the interferon signaling pathway. The chain is Protein E6 from Homo sapiens (Human).